The following is a 379-amino-acid chain: Alcohol dehydrogenase class-3 (379 aa).

Position 2 is an N-acetylserine (Ser2). Zn(2+) contacts are provided by Cys48, His70, Cys100, Cys103, Cys106, Cys114, and Cys177.

The protein belongs to the zinc-containing alcohol dehydrogenase family. Class-III subfamily. It depends on Zn(2+) as a cofactor.

The enzyme catalyses a primary alcohol + NAD(+) = an aldehyde + NADH + H(+). The catalysed reaction is a secondary alcohol + NAD(+) = a ketone + NADH + H(+). It carries out the reaction S-(hydroxymethyl)glutathione + NADP(+) = S-formylglutathione + NADPH + H(+). It catalyses the reaction S-(hydroxymethyl)glutathione + NAD(+) = S-formylglutathione + NADH + H(+). The enzyme catalyses octan-1-ol + NAD(+) = octanal + NADH + H(+). Its function is as follows. Class-III ADH is remarkably ineffective in oxidizing ethanol, but it readily catalyzes the oxidation of long-chain primary alcohols and the oxidation of S-(hydroxymethyl) glutathione. In Drosophila melanogaster (Fruit fly), this protein is Alcohol dehydrogenase class-3 (Fdh).